A 375-amino-acid chain; its full sequence is Alcohol dehydrogenase 1 (375 aa).

N-acetylserine is present on S2. Zn(2+) contacts are provided by C47, H68, C98, C101, C104, C112, and C175. NAD(+) contacts are provided by residues G200–G205, D224, and K229. At K234 the chain carries N6-succinyllysine. V293 to V295 contributes to the NAD(+) binding site. The residue at position 340 (K340) is an N6-succinyllysine. Position 370 (R370) interacts with NAD(+).

Belongs to the zinc-containing alcohol dehydrogenase family. In terms of assembly, homodimer. Zn(2+) is required as a cofactor.

The protein resides in the cytoplasm. The catalysed reaction is a primary alcohol + NAD(+) = an aldehyde + NADH + H(+). It carries out the reaction a secondary alcohol + NAD(+) = a ketone + NADH + H(+). The protein is Alcohol dehydrogenase 1 (ADH1) of Oryctolagus cuniculus (Rabbit).